A 251-amino-acid chain; its full sequence is 5'-nucleotidase SurE 1 (251 aa).

The a divalent metal cation site is built by Asp-8, Asp-9, Ser-39, and Asn-95.

Belongs to the SurE nucleotidase family. The cofactor is a divalent metal cation.

The protein resides in the cytoplasm. The catalysed reaction is a ribonucleoside 5'-phosphate + H2O = a ribonucleoside + phosphate. Nucleotidase that shows phosphatase activity on nucleoside 5'-monophosphates. This chain is 5'-nucleotidase SurE 1, found in Thermus thermophilus (strain ATCC BAA-163 / DSM 7039 / HB27).